A 676-amino-acid polypeptide reads, in one-letter code: MSDQIKFIMDSLNKEPFRKNYNLITFDSLEPMQLLQVLSDVLAEIDPKQLVDIREEMPEQTAKRMLSLLGILKYKPSGNATDMSTFRQGLVIGSKPVIYPVLHWLLQRTNELKKRAYLARFLIKLEVPSEFLQDETVADTNKQYEELMEAFKTLHKEYEQLKISGFSTAEIRKDISAMEEEKDQLIKRVEHLKKRVETAQNHQWMLKIARQLRVEKEREEYLAQQKQEQKNQLFHAVQRLQRVQNQLKSMRQAAADAKPESLMKRLEEEIKFNLYMVTEKFPKELENKKKELHFLQKVVSEPAMGHSDLLELESKINEINTEINQLIEKKMMRNEPIEGKLSLYRQQASIISRKKEAKAEELQEAKEKLASLEREASVKRNQTREFDGTEVLKGDEFKRYVNKLRSKSTVFKKKHQIIAELKAEFGLLQRTEELLKQRHENIQQQLQTMEEKKGISGYSYTQEELERVSALKSEVDEMKGRTLDDMSEMVKKLYSLVSEKKSALASVIKELRQLRQKYQELTQECDEKKSQYDSCAAGLESNRSKLEQEVRRLREECLQEESRYHYTNCMIKNLEVQLRRATDEMKAYISSDQQEKRKAIREQYTKNTAEQENLGKKLREKQKVIRESHGPNMKQAKMWRDLEQLMECKKQCFLKQQSQTSIGQVIQEGGEDRLIL.

N-acetylserine is present on serine 2. A CH (calponin-homology)-like region region spans residues 2–121 (SDQIKFIMDS…LKKRAYLARF (120 aa)). At threonine 61 the chain carries Phosphothreonine. 4 coiled-coil regions span residues 132 to 258 (LQDE…ADAK), 306 to 389 (HSDL…FDGT), 416 to 456 (QIIA…KGIS), and 490 to 622 (VKKL…REKQ).

Belongs to the IFT81 family. Component of the IFT complex B, at least composed of IFT20, IFT22, IFT25, IFT27, IFT46, IFT52, TRAF3IP1/IFT54, IFT57, IFT74, IFT80, IFT81, and IFT88. Interacts with IFT74; the interaction is direct: within the IFT complex B, IFT74 and IFT81 mediate the transport of tubulin within the cilium. Interacts with tubulin; the interaction is direct. Interacts with IFT57 and IFT70B. Interacts with RABL2/RABL2A; binding is equal in the presence of GTP or GDP. Interacts with IFT88. Interacts (via the IFT74/IFT81 heterodimer) with RABL2B. Interacts with CFAP61. As to expression, highly expressed in testis, moderately in ovary, heart, liver, skeletal muscle, kidney and pancreas, low in prostate, brain, placenta and lung and not detected in spleen, thymus, small intestine and colon. Isoform CDV-1R is abundantly expressed in testis.

The protein localises to the cell projection. The protein resides in the cilium. It is found in the cytoplasm. Its subcellular location is the cytoskeleton. It localises to the cilium basal body. Component of the intraflagellar transport (IFT) complex B: together with IFT74, forms a tubulin-binding module that specifically mediates transport of tubulin within the cilium. Binds tubulin via its CH (calponin-homology)-like region. Required for ciliogenesis. Required for proper regulation of SHH signaling. Plays an important role during spermatogenesis by modulating the assembly and elongation of the sperm flagella. This is Intraflagellar transport protein 81 homolog (IFT81) from Homo sapiens (Human).